Here is a 734-residue protein sequence, read N- to C-terminus: Photosystem I P700 chlorophyll a apoprotein A2 (734 aa).

A run of 8 helical transmembrane segments spans residues 46-69 (IFAS…FHVA), 135-158 (LYTG…LHLQ), 175-199 (LNHH…HVAI), 273-291 (IAHH…GHMY), 330-353 (IHFQ…QHMY), 369-395 (AALY…IFFI), 417-439 (AIIS…LYVH), and 517-535 (FLVH…LILV). Residues cysteine 559 and cysteine 568 each coordinate [4Fe-4S] cluster. Helical transmembrane passes span 575–596 (AFYL…YWHW) and 643–665 (LSVW…MFLI). Residues histidine 654, methionine 662, and tyrosine 670 each contribute to the chlorophyll a site. Tryptophan 671 is a binding site for phylloquinone. Residues 707–727 (LVGLAHFSVGYIFTYAAFLIA) traverse the membrane as a helical segment.

This sequence belongs to the PsaA/PsaB family. In terms of assembly, the PsaA/B heterodimer binds the P700 chlorophyll special pair and subsequent electron acceptors. PSI consists of a core antenna complex that captures photons, and an electron transfer chain that converts photonic excitation into a charge separation. The eukaryotic PSI reaction center is composed of at least 11 subunits. The cofactor is P700 is a chlorophyll a/chlorophyll a' dimer, A0 is one or more chlorophyll a, A1 is one or both phylloquinones and FX is a shared 4Fe-4S iron-sulfur center..

The protein localises to the plastid. It is found in the chloroplast thylakoid membrane. It catalyses the reaction reduced [plastocyanin] + hnu + oxidized [2Fe-2S]-[ferredoxin] = oxidized [plastocyanin] + reduced [2Fe-2S]-[ferredoxin]. Functionally, psaA and PsaB bind P700, the primary electron donor of photosystem I (PSI), as well as the electron acceptors A0, A1 and FX. PSI is a plastocyanin-ferredoxin oxidoreductase, converting photonic excitation into a charge separation, which transfers an electron from the donor P700 chlorophyll pair to the spectroscopically characterized acceptors A0, A1, FX, FA and FB in turn. Oxidized P700 is reduced on the lumenal side of the thylakoid membrane by plastocyanin. The chain is Photosystem I P700 chlorophyll a apoprotein A2 from Calycanthus floridus var. glaucus (Eastern sweetshrub).